We begin with the raw amino-acid sequence, 162 residues long: Xanthine phosphoribosyltransferase (162 aa).

Xanthine is bound by residues Leu5 and Thr12. 113–117 provides a ligand contact to 5-phospho-alpha-D-ribose 1-diphosphate; it reads ANGQA. Xanthine is bound at residue Lys141.

Belongs to the purine/pyrimidine phosphoribosyltransferase family. Xpt subfamily. As to quaternary structure, homodimer.

It is found in the cytoplasm. It catalyses the reaction XMP + diphosphate = xanthine + 5-phospho-alpha-D-ribose 1-diphosphate. The protein operates within purine metabolism; XMP biosynthesis via salvage pathway; XMP from xanthine: step 1/1. Its function is as follows. Converts the preformed base xanthine, a product of nucleic acid breakdown, to xanthosine 5'-monophosphate (XMP), so it can be reused for RNA or DNA synthesis. This is Xanthine phosphoribosyltransferase (xpt) from Streptococcus mitis.